A 240-amino-acid polypeptide reads, in one-letter code: MLCPTYTPSVYHFQTQKPVFRKQRFRVCSSTSGGEDDRFKVEYTPWLIVGLGNPGNKYHGTRHNVGFEMIDVLARKEGVLMNTIQSKALIGIGAIEDVPILLAKPQTYMNFSGESVGSLASHYRVPLRHILMIYDEMALPNGVLRLQPKGGQGYHNGVKSVMGHLDGRRNFPRLSIGIGKPPGNMDMKAFLLQKFSPLEQKQIEEALEQGSEAVKTLVLNGFNQGISRFNLVQKYKFHKV.

The protein belongs to the PTH family. CRS2 subfamily. In terms of assembly, part of large ribonucleo-protein complexes that include group IIB introns and either CAF1 or CAF2.

It is found in the plastid. Its subcellular location is the chloroplast stroma. In terms of biological role, required for the splicing of group IIB introns in chloroplasts. This is Chloroplastic group IIB intron splicing facilitator CRS2-B, chloroplastic (CRS2B) from Arabidopsis thaliana (Mouse-ear cress).